Here is a 78-residue protein sequence, read N- to C-terminus: Small ribosomal subunit protein bS16c (78 aa).

The protein belongs to the bacterial ribosomal protein bS16 family.

The protein resides in the plastid. The protein localises to the chloroplast. This Adiantum capillus-veneris (Maidenhair fern) protein is Small ribosomal subunit protein bS16c.